The sequence spans 390 residues: Substance-K receptor (390 aa).

Residues 1–32 (MGTRAIVSDANILSGLESNATGVTAFSMPGWQ) lie on the Extracellular side of the membrane. The N-linked (GlcNAc...) asparagine glycan is linked to Asn-19. A helical membrane pass occupies residues 33-56 (LALWATAYLALVLVAVTGNATVIW). The Cytoplasmic portion of the chain corresponds to 57–69 (IILAHERMRTVTN). Residues 70–90 (YFIINLALADLCMAAFNATFN) traverse the membrane as a helical segment. Topologically, residues 91–107 (FIYASHNIWYFGRAFCY) are extracellular. Cysteines 106 and 181 form a disulfide. A helical membrane pass occupies residues 108–129 (FQNLFPITAMFVSIYSMTAIAA). The Cytoplasmic segment spans residues 130 to 149 (DRYMAIVHPFQPRLSAPSTK). Residues 150 to 170 (AIIAGIWLVALALASPQCFYS) traverse the membrane as a helical segment. The Extracellular segment spans residues 171–196 (TITVDEGATKCVVAWPNDNGGKMLLL). A helical membrane pass occupies residues 197–218 (YHLVVFVLIYFLPLLVMFGAYS). Over 219-251 (VIGLTLWKRAVPRHQAHGANLRHLQAKKKFVKA) the chain is Cytoplasmic. A helical transmembrane segment spans residues 252–272 (MVLVVLTFAICWLPYHLYFIL). Residues 273-290 (GTFQEDIYYHKFIQQVYL) are Extracellular-facing. The helical transmembrane segment at 291 to 310 (ALFWLAMSSTMYNPIIYCCL) threads the bilayer. Over 311–390 (NHRFRSGFRL…PAGPICKAQA (80 aa)) the chain is Cytoplasmic. The S-palmitoyl cysteine moiety is linked to residue Cys-324. The interval 365 to 390 (HSEATNGQVGSPQDGEPAGPICKAQA) is disordered. Residues 366–375 (SEATNGQVGS) are compositionally biased toward polar residues.

It belongs to the G-protein coupled receptor 1 family.

It is found in the cell membrane. This is a receptor for the tachykinin neuropeptide substance K (neurokinin A). It is associated with G proteins that activate a phosphatidylinositol-calcium second messenger system. The rank order of affinity of this receptor to tachykinins is: substance K &gt; neuromedin-K &gt; substance P. The protein is Substance-K receptor (Tacr2) of Rattus norvegicus (Rat).